Reading from the N-terminus, the 237-residue chain is Cysteine-rich venom protein DIS1 (237 aa).

An N-terminal signal peptide occupies residues 1–18 (MFVFILLSLAAVLQQSFG). The SCP domain maps to 37–165 (VDKHNAFRRS…SYNYFYVCQY (129 aa)). Cystine bridges form between cysteine 74/cysteine 152, cysteine 91/cysteine 166, cysteine 147/cysteine 163, cysteine 185/cysteine 192, cysteine 188/cysteine 197, cysteine 201/cysteine 234, and cysteine 219/cysteine 232. The region spanning 201 to 234 (CSREDVFMNCKSLVAQSNCQDDYIRKNCPATCFC) is the ShKT domain.

This sequence belongs to the CRISP family. As to expression, expressed by the venom gland.

It is found in the secreted. Its function is as follows. Weakly blocks contraction of smooth muscle elicited by high potassium-induced depolarization, but does not block caffeine-stimulated contraction. May target voltage-gated calcium channels on smooth muscle. This chain is Cysteine-rich venom protein DIS1, found in Dispholidus typus (Boomslang).